Reading from the N-terminus, the 100-residue chain is Small ribosomal subunit protein uS14 (100 aa).

This sequence belongs to the universal ribosomal protein uS14 family. Part of the 30S ribosomal subunit. Contacts proteins S3 and S10.

Binds 16S rRNA, required for the assembly of 30S particles and may also be responsible for determining the conformation of the 16S rRNA at the A site. In Synechococcus sp. (strain CC9311), this protein is Small ribosomal subunit protein uS14.